Here is a 507-residue protein sequence, read N- to C-terminus: Protein DETOXIFICATION 41 (507 aa).

Over 1–62 (MSSTETYEPL…KLLWTLSGAS (62 aa)) the chain is Cytoplasmic. Residues 63–83 (IVVSVLNYMLSFVTVMFTGHL) form a helical membrane-spanning segment. Over 84–92 (GSLQLAGAS) the chain is Vacuolar. A helical membrane pass occupies residues 93–113 (IATVGIQGLAYGIMLGMASAV). The Cytoplasmic portion of the chain corresponds to 114 to 137 (QTVCGQAYGARQYSSMGIICQRAM). A helical transmembrane segment spans residues 138-158 (VLHLAAAVFLTFLYWYSGPIL). Residues 159 to 170 (KTMGQSVAIAHE) lie on the Vacuolar side of the membrane. Residues 171–191 (GQIFARGMIPQIYAFALACPM) form a helical membrane-spanning segment. Residues 192-202 (QRFLQAQNIVN) lie on the Cytoplasmic side of the membrane. The helical transmembrane segment at 203–223 (PLAYMSLGVFLLHTLLTWLVT) threads the bilayer. Residue Asn-224 is a topological domain, vacuolar. Residues 225–245 (VLDFGLLGAALILSFSWWLLV) traverse the membrane as a helical segment. At 246 to 283 (AVNGMYILMSPNCKETWTGFSTRAFRGIWPYFKLTVAS) the chain is on the cytoplasmic side. The helical transmembrane segment at 284-304 (AVMLCLEIWYNQGLVIISGLL) threads the bilayer. Topologically, residues 305-312 (SNPTISLD) are vacuolar. Residues 313–333 (AISICMYYLNWDMQFMLGLSA) traverse the membrane as a helical segment. Residues 334–355 (AISVRVSNELGAGNPRVAMLSV) lie on the Cytoplasmic side of the membrane. A helical membrane pass occupies residues 356 to 376 (VVVNITTVLISSVLCVIVLVF). Topologically, residues 377 to 389 (RVGLSKAFTSDAE) are vacuolar. Residues 390–410 (VIAAVSDLFPLLAVSIFLNGI) form a helical membrane-spanning segment. Residues 411-425 (QPILSGVAIGSGWQA) are Cytoplasmic-facing. A helical membrane pass occupies residues 426–446 (VVAYVNLVTYYVIGLPIGCVL). Residues 447 to 453 (GFKTSLG) lie on the Vacuolar side of the membrane. Residues 454-474 (VAGIWWGMIAGVILQTLTLIV) form a helical membrane-spanning segment. The Cytoplasmic segment spans residues 475-507 (LTLKTNWTSEVENAAQRVKTSATENQEMANAGV).

Belongs to the multi antimicrobial extrusion (MATE) (TC 2.A.66.1) family. Expressed in reproductive tissues, from buds to siliques. Restricted to the endothelium layer of the ovule and the seed coat.

Its subcellular location is the vacuole membrane. Its pathway is secondary metabolite biosynthesis; flavonoid biosynthesis. Acts as a flavonoid/H(+)-antiporter that control the vacuolar sequestration of flavonoids in the seed coat endothelium. Could transport the anthocyanin cyanidin-3-O-glucoside and epicatechin 3'-O-glucoside in vitro. This chain is Protein DETOXIFICATION 41, found in Arabidopsis thaliana (Mouse-ear cress).